We begin with the raw amino-acid sequence, 296 residues long: Phosphatidylglycerol--prolipoprotein diacylglyceryl transferase (296 aa).

3 helical membrane passes run 17–37 (LAVR…IVVG), 59–79 (MMFY…VLFY), and 97–117 (GGMS…LFAW). Arg142 contributes to the a 1,2-diacyl-sn-glycero-3-phospho-(1'-sn-glycerol) binding site. The next 2 helical transmembrane spans lie at 230–250 (MGAV…TVEF) and 257–277 (FLGL…PMIL).

This sequence belongs to the Lgt family.

The protein resides in the cell inner membrane. The catalysed reaction is L-cysteinyl-[prolipoprotein] + a 1,2-diacyl-sn-glycero-3-phospho-(1'-sn-glycerol) = an S-1,2-diacyl-sn-glyceryl-L-cysteinyl-[prolipoprotein] + sn-glycerol 1-phosphate + H(+). It participates in protein modification; lipoprotein biosynthesis (diacylglyceryl transfer). Functionally, catalyzes the transfer of the diacylglyceryl group from phosphatidylglycerol to the sulfhydryl group of the N-terminal cysteine of a prolipoprotein, the first step in the formation of mature lipoproteins. The sequence is that of Phosphatidylglycerol--prolipoprotein diacylglyceryl transferase from Burkholderia lata (strain ATCC 17760 / DSM 23089 / LMG 22485 / NCIMB 9086 / R18194 / 383).